A 408-amino-acid chain; its full sequence is Protein ZNF365 (408 aa).

Ser-16 carries the post-translational modification Phosphoserine. A C2H2-type; degenerate zinc finger spans residues 26–51; that stretch reads FRCPRCGDHTRFRSLSSLRAHLEFSH. Ser-139 and Ser-146 each carry phosphoserine. Residues 170–298 are a coiled coil; that stretch reads VEAVDRTIEK…QLEYYQSQQA (129 aa). Phosphothreonine is present on Thr-176. Ser-370 carries the phosphoserine modification.

In terms of assembly, homodimers. Interacts with NDE1 and NDEL1. Interacts with DISC1. Interacts with PARP1. Interacts with MCRS1. Expressed in cerebral cortex, hippocampus, olfactory tubercle and striatum.

The protein localises to the cytoplasm. Its subcellular location is the cytoskeleton. The protein resides in the microtubule organizing center. It is found in the centrosome. Its function is as follows. Involved in the positive regulation of oligodendrocyte differentiation during postnatal growth. Involved in the morphogenesis of basket cells in the somatosensory cortex during embryogenesis. Involved in dendritic arborization, morphogenesis of spine density dendrite, and establishment of postsynaptic dendrite density in cortical pyramidal neurons. Involved in the regulation of neurogenesis. Negatively regulates neurite outgrowth. Involved in homologous recombination (HR) repair pathway. Required for proper resolution of DNA double-strand breaks (DSBs) by HR. Is required for recovery of stalled replication forks, and directly contributes to genomic stability. Interacts with PARP1 and mediates MRE11-dependent DNA end resection during replication fork recovery. Contributes to genomic stability by preventing telomere dysfunction. The protein is Protein ZNF365 (Znf365) of Rattus norvegicus (Rat).